The sequence spans 280 residues: 23S rRNA (guanine(748)-N(1))-methyltransferase (280 aa).

Zn(2+) contacts are provided by cysteine 11, cysteine 14, cysteine 27, and histidine 31. S-adenosyl-L-methionine-binding positions include tyrosine 70, 100–101, and histidine 188; that span reads TG.

This sequence belongs to the methyltransferase superfamily. RlmA family.

It carries out the reaction guanosine(748) in 23S rRNA + S-adenosyl-L-methionine = N(1)-methylguanosine(748) in 23S rRNA + S-adenosyl-L-homocysteine + H(+). Its function is as follows. Specifically methylates the guanosine in position 748 of 23S rRNA. Confers resistance to the macrolide antibiotic tylosine. The polypeptide is 23S rRNA (guanine(748)-N(1))-methyltransferase (rlmAII) (Streptomyces fradiae (Streptomyces roseoflavus)).